The chain runs to 161 residues: Mediator of RNA polymerase II transcription subunit 10 (161 aa).

Belongs to the Mediator complex subunit 10 family. In terms of assembly, component of the Mediator complex.

The protein resides in the nucleus. Functionally, component of the Mediator complex, a coactivator involved in the regulated transcription of nearly all RNA polymerase II-dependent genes. Mediator functions as a bridge to convey information from gene-specific regulatory proteins to the basal RNA polymerase II transcription machinery. Mediator is recruited to promoters by direct interactions with regulatory proteins and serves as a scaffold for the assembly of a functional preinitiation complex with RNA polymerase II and the general transcription factors. This is Mediator of RNA polymerase II transcription subunit 10 (NUT2) from Kluyveromyces lactis (strain ATCC 8585 / CBS 2359 / DSM 70799 / NBRC 1267 / NRRL Y-1140 / WM37) (Yeast).